A 495-amino-acid chain; its full sequence is Glycerol kinase (495 aa).

Residue Thr-13 participates in ADP binding. ATP is bound by residues Thr-13, Thr-14, and Ser-15. Thr-13 provides a ligand contact to sn-glycerol 3-phosphate. Residue Arg-17 participates in ADP binding. Residues Arg-83, Glu-84, Tyr-135, and Asp-244 each coordinate sn-glycerol 3-phosphate. 5 residues coordinate glycerol: Arg-83, Glu-84, Tyr-135, Asp-244, and Gln-245. Positions 266 and 309 each coordinate ADP. ATP is bound by residues Thr-266, Gly-309, Gln-313, and Gly-410. 2 residues coordinate ADP: Gly-410 and Asn-414.

Belongs to the FGGY kinase family.

It catalyses the reaction glycerol + ATP = sn-glycerol 3-phosphate + ADP + H(+). It participates in polyol metabolism; glycerol degradation via glycerol kinase pathway; sn-glycerol 3-phosphate from glycerol: step 1/1. Its activity is regulated as follows. Inhibited by fructose 1,6-bisphosphate (FBP). Its function is as follows. Key enzyme in the regulation of glycerol uptake and metabolism. Catalyzes the phosphorylation of glycerol to yield sn-glycerol 3-phosphate. This is Glycerol kinase from Shewanella woodyi (strain ATCC 51908 / MS32).